We begin with the raw amino-acid sequence, 117 residues long: Fluoride-specific ion channel FluC 2 (117 aa).

4 helical membrane-spanning segments follow: residues 1–21, 33–53, 60–80, and 95–115; these read MISI…RSAI, LPIA…LTIG, WFPA…STLA, and LFLN…YIGY. The Na(+) site is built by Gly-71 and Thr-74.

This sequence belongs to the fluoride channel Fluc/FEX (TC 1.A.43) family.

Its subcellular location is the cell membrane. The catalysed reaction is fluoride(in) = fluoride(out). Na(+) is not transported, but it plays an essential structural role and its presence is essential for fluoride channel function. In terms of biological role, fluoride-specific ion channel. Important for reducing fluoride concentration in the cell, thus reducing its toxicity. The polypeptide is Fluoride-specific ion channel FluC 2 (Staphylococcus aureus (strain COL)).